We begin with the raw amino-acid sequence, 940 residues long: Isoleucine--tRNA ligase (940 aa).

A 'HIGH' region motif is present at residues 58 to 68; sequence PYANGSIHIGH. Position 564 (glutamate 564) interacts with L-isoleucyl-5'-AMP. Positions 605 to 609 match the 'KMSKS' region motif; that stretch reads KMSKS. Lysine 608 contacts ATP. The Zn(2+) site is built by cysteine 903, cysteine 906, cysteine 923, and cysteine 926.

Belongs to the class-I aminoacyl-tRNA synthetase family. IleS type 1 subfamily. Monomer. Zn(2+) serves as cofactor.

The protein resides in the cytoplasm. It carries out the reaction tRNA(Ile) + L-isoleucine + ATP = L-isoleucyl-tRNA(Ile) + AMP + diphosphate. Functionally, catalyzes the attachment of isoleucine to tRNA(Ile). As IleRS can inadvertently accommodate and process structurally similar amino acids such as valine, to avoid such errors it has two additional distinct tRNA(Ile)-dependent editing activities. One activity is designated as 'pretransfer' editing and involves the hydrolysis of activated Val-AMP. The other activity is designated 'posttransfer' editing and involves deacylation of mischarged Val-tRNA(Ile). The sequence is that of Isoleucine--tRNA ligase from Shewanella sp. (strain W3-18-1).